A 287-amino-acid polypeptide reads, in one-letter code: Ferredoxin-type protein NapH (287 aa).

At 1–29 the chain is on the cytoplasmic side; the sequence is MANRKRDAGREALEKKGWWRSHRWLVLRR. A helical transmembrane segment spans residues 30–50; it reads LCQFFVLGMFLSGPWFGVWIL. Residues 51 to 79 lie on the Periplasmic side of the membrane; that stretch reads HGNYSSSLLFDTVPLTDPLMTLQSLASGH. A helical transmembrane segment spans residues 80–100; sequence LPATVALTGAVIITVLYALAG. At 101-139 the chain is on the cytoplasmic side; sequence KRLFCSWVCPLNPITDLANWLRRRFDLNQSATIPRHIRY. The chain crosses the membrane as a helical span at residues 140–160; it reads VLLVVILVGSALTGTLIWEWI. The Periplasmic portion of the chain corresponds to 161 to 170; sequence NPVSLMGRSL. The helical transmembrane segment at 171 to 191 threads the bilayer; the sequence is VMGFGSGALLILALFLFDLLV. At 192-287 the chain is on the cytoplasmic side; the sequence is VEHGWCGHIC…TTRWSSGAKS (96 aa). 2 consecutive 4Fe-4S ferredoxin-type domains span residues 217-247 and 251-280; these read TVAA…APVL and SPVQ…ITTR. Residues Cys226, Cys229, Cys232, Cys236, Cys260, Cys263, Cys266, and Cys270 each contribute to the [4Fe-4S] cluster site.

In terms of assembly, interacts with NapC. [4Fe-4S] cluster is required as a cofactor.

Its subcellular location is the cell inner membrane. Its function is as follows. Required for electron transfer from ubiquinol, via NapC, to the periplasmic nitrate reductase NapAB complex. The sequence is that of Ferredoxin-type protein NapH (napH) from Escherichia coli (strain K12).